The following is a 52-amino-acid chain: Mitogenic lectin alpha chain (52 aa).

It belongs to the leguminous lectin family. Tetramer of two alpha and two beta chains.

The protein is Mitogenic lectin alpha chain of Vicia sativa (Spring vetch).